The chain runs to 337 residues: Mitochondrial glutathione transporter SLC25A40 (337 aa).

Solcar repeat units lie at residues 14 to 132, 140 to 224, and 234 to 328; these read VTPL…LSTF, NETR…LRRW, and STFM…GKGF. Transmembrane regions (helical) follow at residues 20–40, 104–124, 146–166, 200–221, 240–260, and 299–319; these read MMAS…LDVV, LWSG…IYFT, IVAG…LELI, WAPT…YENL, FTAG…FDVV, and GLFT…AIMI.

This sequence belongs to the mitochondrial carrier (TC 2.A.29) family. Widely expressed at low level.

The protein localises to the mitochondrion inner membrane. The enzyme catalyses glutathione(in) = glutathione(out). In terms of biological role, probable mitochondrial transporter required for glutathione import into mitochondria. Glutathione, which plays key roles in oxidative metabolism, is produced exclusively in the cytosol and is imported in many organelles. Mitochondrial glutathione is required for the activity and stability of proteins containing iron-sulfur clusters, as well as erythropoiesis. The sequence is that of Mitochondrial glutathione transporter SLC25A40 from Rattus norvegicus (Rat).